A 231-amino-acid polypeptide reads, in one-letter code: Ion-translocating oxidoreductase complex subunit E (231 aa).

6 consecutive transmembrane segments (helical) span residues 18 to 38, 39 to 59, 63 to 83, 86 to 106, 125 to 145, and 182 to 202; these read ALVQ…ATNA, LGLG…ISTL, TPAE…VSAV, LINA…PLIV, ALSA…MFVL, and PFLL…MLAG.

The protein belongs to the NqrDE/RnfAE family. In terms of assembly, the complex is composed of six subunits: RsxA, RsxB, RsxC, RsxD, RsxE and RsxG.

The protein localises to the cell inner membrane. In terms of biological role, part of a membrane-bound complex that couples electron transfer with translocation of ions across the membrane. Required to maintain the reduced state of SoxR. The protein is Ion-translocating oxidoreductase complex subunit E of Escherichia coli O1:K1 / APEC.